The primary structure comprises 305 residues: Oxygen-dependent coproporphyrinogen-III oxidase (305 aa).

Ser93 contributes to the substrate binding site. A divalent metal cation-binding residues include His97 and His107. The active-site Proton donor is His107. 109–111 is a substrate binding site; the sequence is NVR. A divalent metal cation-binding residues include His146 and His176. The important for dimerization stretch occupies residues 241-276; it reads YVEFNLVFDRGTLFGLQSGGRTESILMSLPPQVRWG. Residue 259-261 coordinates substrate; it reads GGR.

It belongs to the aerobic coproporphyrinogen-III oxidase family. Homodimer. It depends on a divalent metal cation as a cofactor.

It localises to the cytoplasm. The enzyme catalyses coproporphyrinogen III + O2 + 2 H(+) = protoporphyrinogen IX + 2 CO2 + 2 H2O. It participates in porphyrin-containing compound metabolism; protoporphyrin-IX biosynthesis; protoporphyrinogen-IX from coproporphyrinogen-III (O2 route): step 1/1. Functionally, involved in the heme biosynthesis. Catalyzes the aerobic oxidative decarboxylation of propionate groups of rings A and B of coproporphyrinogen-III to yield the vinyl groups in protoporphyrinogen-IX. In Pseudomonas aeruginosa (strain LESB58), this protein is Oxygen-dependent coproporphyrinogen-III oxidase.